We begin with the raw amino-acid sequence, 551 residues long: Glucose-6-phosphate isomerase (551 aa).

Glu352 serves as the catalytic Proton donor. Residues His383 and Lys511 contribute to the active site.

This sequence belongs to the GPI family.

It localises to the cytoplasm. The catalysed reaction is alpha-D-glucose 6-phosphate = beta-D-fructose 6-phosphate. It functions in the pathway carbohydrate biosynthesis; gluconeogenesis. Its pathway is carbohydrate degradation; glycolysis; D-glyceraldehyde 3-phosphate and glycerone phosphate from D-glucose: step 2/4. Functionally, catalyzes the reversible isomerization of glucose-6-phosphate to fructose-6-phosphate. This chain is Glucose-6-phosphate isomerase, found in Chlorobium luteolum (strain DSM 273 / BCRC 81028 / 2530) (Pelodictyon luteolum).